We begin with the raw amino-acid sequence, 471 residues long: Glutamate--tRNA ligase (471 aa).

The 'HIGH' region motif lies at 9-19; it reads PSPTGYLHVGG. Zn(2+) contacts are provided by cysteine 98, cysteine 100, cysteine 125, and histidine 127. Residues 237–241 carry the 'KMSKS' region motif; sequence KLSKR. Lysine 240 contributes to the ATP binding site.

The protein belongs to the class-I aminoacyl-tRNA synthetase family. Glutamate--tRNA ligase type 1 subfamily. Monomer. Zn(2+) is required as a cofactor.

The protein resides in the cytoplasm. The enzyme catalyses tRNA(Glu) + L-glutamate + ATP = L-glutamyl-tRNA(Glu) + AMP + diphosphate. Functionally, catalyzes the attachment of glutamate to tRNA(Glu) in a two-step reaction: glutamate is first activated by ATP to form Glu-AMP and then transferred to the acceptor end of tRNA(Glu). The polypeptide is Glutamate--tRNA ligase (Escherichia coli O157:H7).